A 204-amino-acid polypeptide reads, in one-letter code: 3-isopropylmalate dehydratase small subunit (204 aa).

Belongs to the LeuD family. LeuD type 1 subfamily. Heterodimer of LeuC and LeuD.

It carries out the reaction (2R,3S)-3-isopropylmalate = (2S)-2-isopropylmalate. The protein operates within amino-acid biosynthesis; L-leucine biosynthesis; L-leucine from 3-methyl-2-oxobutanoate: step 2/4. Functionally, catalyzes the isomerization between 2-isopropylmalate and 3-isopropylmalate, via the formation of 2-isopropylmaleate. The protein is 3-isopropylmalate dehydratase small subunit of Ruthia magnifica subsp. Calyptogena magnifica.